Consider the following 290-residue polypeptide: MLKREMKPESDRPRKVRFRIASSHSGRVLKEVYEDGQPSGSLDSECASICGIDGLGDSDGQQNGHIESEGDENENDQDSLLVLARAASEKGFGTRRVNILSKNGTVRGVKYKVSAGQALFNNLTKVLQQPSTDLEFDRVVIYTTCLRVVRTTFERCELVRKIFQNHRVKFEEKNIALNGEYGKELDERCRRVSEAPSLPVVFIDGHYLGGAEKILSMNESGELQDILTKIERVQHPHECPSCGGFGFLPCSVCHGSKMSMFRNCFTDSFKALKCTACNENGLQRCKNCAG.

One can recognise a Glutaredoxin domain in the interval 127–234 (LQQPSTDLEF…DILTKIERVQ (108 aa)).

Belongs to the GRXCR1 family. Expressed at low levels in adult lung, brain and duodenum with moderate levels in testis. Highly expressed in fetal cochlea.

Its subcellular location is the cell projection. The protein resides in the stereocilium. It localises to the microvillus. The protein localises to the kinocilium. Its function is as follows. May play a role in actin filament architecture in developing stereocilia of sensory cells. This chain is Glutaredoxin domain-containing cysteine-rich protein 1 (GRXCR1), found in Homo sapiens (Human).